The primary structure comprises 397 residues: Elongation factor Tu (397 aa).

Residues 10–207 (KPHVNIGTIG…ACDSYIPEPE (198 aa)) enclose the tr-type G domain. Residues 19-26 (GHIDHGKT) are G1. 19–26 (GHIDHGKT) provides a ligand contact to GTP. T26 lines the Mg(2+) pocket. Positions 60-64 (GITIA) are G2. The tract at residues 81–84 (DCPG) is G3. GTP is bound by residues 81–85 (DCPGH) and 136–139 (NKCD). Residues 136 to 139 (NKCD) are G4. Positions 174–176 (SAL) are G5.

Belongs to the TRAFAC class translation factor GTPase superfamily. Classic translation factor GTPase family. EF-Tu/EF-1A subfamily. In terms of assembly, monomer.

The protein resides in the cytoplasm. The enzyme catalyses GTP + H2O = GDP + phosphate + H(+). Its function is as follows. GTP hydrolase that promotes the GTP-dependent binding of aminoacyl-tRNA to the A-site of ribosomes during protein biosynthesis. The polypeptide is Elongation factor Tu (Oleidesulfovibrio alaskensis (strain ATCC BAA-1058 / DSM 17464 / G20) (Desulfovibrio alaskensis)).